Reading from the N-terminus, the 155-residue chain is Protein-export protein SecB (155 aa).

Belongs to the SecB family. As to quaternary structure, homotetramer, a dimer of dimers. One homotetramer interacts with 1 SecA dimer.

The protein resides in the cytoplasm. Its function is as follows. One of the proteins required for the normal export of preproteins out of the cell cytoplasm. It is a molecular chaperone that binds to a subset of precursor proteins, maintaining them in a translocation-competent state. It also specifically binds to its receptor SecA. This is Protein-export protein SecB from Klebsiella pneumoniae subsp. pneumoniae (strain ATCC 700721 / MGH 78578).